The sequence spans 361 residues: Chorismate synthase (361 aa).

NADP(+)-binding residues include Arg-48 and Arg-54. FMN-binding positions include 125–127, 238–239, Gly-278, 293–297, and Arg-319; these read RSS, NA, and KPTSS.

The protein belongs to the chorismate synthase family. As to quaternary structure, homotetramer. The cofactor is FMNH2.

The catalysed reaction is 5-O-(1-carboxyvinyl)-3-phosphoshikimate = chorismate + phosphate. It functions in the pathway metabolic intermediate biosynthesis; chorismate biosynthesis; chorismate from D-erythrose 4-phosphate and phosphoenolpyruvate: step 7/7. Its function is as follows. Catalyzes the anti-1,4-elimination of the C-3 phosphate and the C-6 proR hydrogen from 5-enolpyruvylshikimate-3-phosphate (EPSP) to yield chorismate, which is the branch point compound that serves as the starting substrate for the three terminal pathways of aromatic amino acid biosynthesis. This reaction introduces a second double bond into the aromatic ring system. The sequence is that of Chorismate synthase from Methylobacillus flagellatus (strain ATCC 51484 / DSM 6875 / VKM B-1610 / KT).